We begin with the raw amino-acid sequence, 450 residues long: Mitochondrial distribution and morphology protein 10 (450 aa).

This sequence belongs to the MDM10 family. In terms of assembly, component of the ER-mitochondria encounter structure (ERMES) or MDM complex, composed of MMM1, MDM10, MDM12 and MDM34. Associates with the mitochondrial outer membrane sorting assembly machinery SAM(core) complex.

The protein localises to the mitochondrion outer membrane. Component of the ERMES/MDM complex, which serves as a molecular tether to connect the endoplasmic reticulum and mitochondria. Components of this complex are involved in the control of mitochondrial shape and protein biogenesis and may function in phospholipid exchange. MDM10 is involved in the late assembly steps of the general translocase of the mitochondrial outer membrane (TOM complex). Functions in the TOM40-specific route of the assembly of outer membrane beta-barrel proteins, including the association of TOM40 with the receptor TOM22 and small TOM proteins. Can associate with the SAM(core) complex as well as the MDM12-MMM1 complex, both involved in late steps of the major beta-barrel assembly pathway, that is responsible for biogenesis of all outer membrane beta-barrel proteins. May act as a switch that shuttles between both complexes and channels precursor proteins into the TOM40-specific pathway. Plays a role in mitochondrial morphology and in the inheritance of mitochondria. This chain is Mitochondrial distribution and morphology protein 10, found in Paracoccidioides lutzii (strain ATCC MYA-826 / Pb01) (Paracoccidioides brasiliensis).